Consider the following 98-residue polypeptide: Integration host factor subunit alpha (98 aa).

Basic and acidic residues predominate over residues 53–69 (DLREKSERPGRNPKTGE). Positions 53 to 73 (DLREKSERPGRNPKTGEDIPI) are disordered.

Belongs to the bacterial histone-like protein family. In terms of assembly, heterodimer of an alpha and a beta chain.

This protein is one of the two subunits of integration host factor, a specific DNA-binding protein that functions in genetic recombination as well as in transcriptional and translational control. The polypeptide is Integration host factor subunit alpha (Aliivibrio salmonicida (strain LFI1238) (Vibrio salmonicida (strain LFI1238))).